Consider the following 184-residue polypeptide: NADH-quinone oxidoreductase subunit B (184 aa).

Residues cysteine 37, cysteine 38, cysteine 103, and cysteine 132 each coordinate [4Fe-4S] cluster.

The protein belongs to the complex I 20 kDa subunit family. NDH-1 is composed of 14 different subunits. Subunits NuoB, C, D, E, F, and G constitute the peripheral sector of the complex. Requires [4Fe-4S] cluster as cofactor.

The protein resides in the cell membrane. It carries out the reaction a quinone + NADH + 5 H(+)(in) = a quinol + NAD(+) + 4 H(+)(out). In terms of biological role, NDH-1 shuttles electrons from NADH, via FMN and iron-sulfur (Fe-S) centers, to quinones in the respiratory chain. The immediate electron acceptor for the enzyme in this species is believed to be a menaquinone. Couples the redox reaction to proton translocation (for every two electrons transferred, four hydrogen ions are translocated across the cytoplasmic membrane), and thus conserves the redox energy in a proton gradient. This Rhodococcus erythropolis (strain PR4 / NBRC 100887) protein is NADH-quinone oxidoreductase subunit B.